A 431-amino-acid chain; its full sequence is Histidinol dehydrogenase (431 aa).

The NAD(+) site is built by tyrosine 124, glutamine 187, and asparagine 210. Residues serine 236, glutamine 258, and histidine 261 each contribute to the substrate site. 2 residues coordinate Zn(2+): glutamine 258 and histidine 261. Catalysis depends on proton acceptor residues glutamate 325 and histidine 326. Substrate-binding residues include histidine 326, aspartate 359, glutamate 413, and histidine 418. Residue aspartate 359 coordinates Zn(2+). Zn(2+) is bound at residue histidine 418.

This sequence belongs to the histidinol dehydrogenase family. Requires Zn(2+) as cofactor.

It catalyses the reaction L-histidinol + 2 NAD(+) + H2O = L-histidine + 2 NADH + 3 H(+). Its pathway is amino-acid biosynthesis; L-histidine biosynthesis; L-histidine from 5-phospho-alpha-D-ribose 1-diphosphate: step 9/9. Functionally, catalyzes the sequential NAD-dependent oxidations of L-histidinol to L-histidinaldehyde and then to L-histidine. The protein is Histidinol dehydrogenase of Legionella pneumophila subsp. pneumophila (strain Philadelphia 1 / ATCC 33152 / DSM 7513).